A 614-amino-acid chain; its full sequence is Probable Xaa-Pro aminopeptidase P (614 aa).

Residues aspartate 409, aspartate 420, glutamate 518, and glutamate 532 each contribute to the Mn(2+) site.

Belongs to the peptidase M24B family. The cofactor is Mn(2+).

The catalysed reaction is Release of any N-terminal amino acid, including proline, that is linked to proline, even from a dipeptide or tripeptide.. Its function is as follows. Catalyzes the removal of a penultimate prolyl residue from the N-termini of peptides. The sequence is that of Probable Xaa-Pro aminopeptidase P (ampp) from Aspergillus niger (strain ATCC MYA-4892 / CBS 513.88 / FGSC A1513).